A 521-amino-acid chain; its full sequence is MHSLDEPLDLKLSITKLRAAREKRERTLGVVRHHALHRELGLVDDSPAPGSPGSPPPGFLLNPKFPEKVDGRFSAAPLVDLSLSPPSGLDSPNGSSSLSPECQGNGDLPPLPTAVDFQPLRYLDGVPSSFQFFLPLGSGGALHLPASSFLPPPKDKCLSPELPLAKQLVCRWAKCNQLFELLQDLVDHVNDHHVKPEQDARYCCHWEGCARHGRGFNARYKMLIHIRTHTNEKPHRCPTCNKSFSRLENLKIHNRSHTGEKPYVCPYEGCNKRYSNSSDRFKHTRTHYVDKPYYCKMPGCHKRYTDPSSLRKHIKAHGHFVSHEQQELLQLRPPPKPPLPTPDSGSYVSGAQIIIPNPAALFGGPSLPGLPLPLPPGPLDLSALACGNGGGGGGGIGPGLPGSVLPLNLAKNPLLPSPFGAGGLGLPVVSLLGGSAGSKAEGEKGRGSVPARVLGLEDHKTPLERTERSRSRPSPDGLPLLPGTVLDLSTGNSAASSPEVLTPGWVVIPPGSVLLKPAVVN.

Positions 35–174 (ALHRELGLVD…AKQLVCRWAK (140 aa)) are interaction with CTNND1. 2 disordered regions span residues 41-63 (GLVDDSPAPGSPGSPPPGFLLNP) and 84-110 (SPPSGLDSPNGSSSLSPECQGNGDLPP). A compositionally biased stretch (pro residues) spans 49-58 (PGSPGSPPPG). A transcription activation region spans residues 71 to 137 (GRFSAAPLVD…SSFQFFLPLG (67 aa)). Residues 84–100 (SPPSGLDSPNGSSSLSP) show a composition bias toward low complexity. The interval 148–171 (SFLPPPKDKCLSPELPLAKQLVCR) is transcription repression. Residues 168–193 (LVCRWAKCNQLFELLQDLVDHVNDHH) form a C2H2-type 1 zinc finger. The C2H2-type 2; atypical zinc finger occupies 202-229 (YCCHWEGCARHGRGFNARYKMLIHIRTH). 3 C2H2-type zinc fingers span residues 235 to 257 (HRCPTCNKSFSRLENLKIHNRSH), 263 to 287 (YVCPYEGCNKRYSNSSDRFKHTRTH), and 293 to 317 (YYCKMPGCHKRYTDPSSLRKHIKAH). A disordered region spans residues 436–501 (AGSKAEGEKG…NSAASSPEVL (66 aa)). Positions 455 to 470 (GLEDHKTPLERTERSR) are enriched in basic and acidic residues. The segment covering 487-496 (DLSTGNSAAS) has biased composition (polar residues).

Belongs to the GLI C2H2-type zinc-finger protein family. As to quaternary structure, interacts with CTBP1 and HDAC3. Interacts with CTNNB1 and CTNND1. Interacts with SUFU. C-terminus cleavage is induced by interaction with CTNND1 and enhances by Src tyrosine kinase. As to expression, expressed at high levels in kidney, and at lower levels in heart and lung.

Its subcellular location is the nucleus speckle. It is found in the cytoplasm. Can act either as a transcriptional repressor or as a transcriptional activator, depending on the cell context. Acts as a repressor of the Hedgehog signaling pathway. Represses the Hedgehog-dependent expression of Wnt4. Necessary to maintain the differentiated epithelial phenotype in renal cells through the inhibition of SNAI1, which itself induces the epithelial-to-mesenchymal transition. Represses transcriptional activation by CTNNB1 in the Wnt signaling pathway. May act by recruiting the corepressors CTBP1 and HDAC3. May be involved in neuron differentiation. The chain is Zinc finger protein GLIS2 (Glis2) from Mus musculus (Mouse).